The sequence spans 435 residues: Methylenetetrahydrofolate--tRNA-(uracil-5-)-methyltransferase TrmFO (435 aa).

9-14 is a binding site for FAD; sequence GAGLAG.

This sequence belongs to the MnmG family. TrmFO subfamily. FAD serves as cofactor.

Its subcellular location is the cytoplasm. It carries out the reaction uridine(54) in tRNA + (6R)-5,10-methylene-5,6,7,8-tetrahydrofolate + NADH + H(+) = 5-methyluridine(54) in tRNA + (6S)-5,6,7,8-tetrahydrofolate + NAD(+). It catalyses the reaction uridine(54) in tRNA + (6R)-5,10-methylene-5,6,7,8-tetrahydrofolate + NADPH + H(+) = 5-methyluridine(54) in tRNA + (6S)-5,6,7,8-tetrahydrofolate + NADP(+). Functionally, catalyzes the folate-dependent formation of 5-methyl-uridine at position 54 (M-5-U54) in all tRNAs. The sequence is that of Methylenetetrahydrofolate--tRNA-(uracil-5-)-methyltransferase TrmFO from Enterococcus faecalis (strain ATCC 700802 / V583).